Consider the following 277-residue polypeptide: Large ribosomal subunit protein uL2c (277 aa).

Over residues 1–11 (MNTRSYSTFTP) the composition is skewed to polar residues. Disordered regions lie at residues 1–47 (MNTR…RNNS) and 254–277 (YSAL…RRRK).

Belongs to the universal ribosomal protein uL2 family. Part of the 50S ribosomal subunit.

It is found in the plastid. The protein resides in the chloroplast. The protein is Large ribosomal subunit protein uL2c (rpl2) of Cryptomeria japonica (Japanese cedar).